Reading from the N-terminus, the 155-residue chain is Ribonuclease HI (155 aa).

An RNase H type-1 domain is found at 1–142 (MTKQVEIFTD…CDELARAAAE (142 aa)). Mg(2+) is bound by residues aspartate 10, glutamate 48, aspartate 70, and aspartate 134.

It belongs to the RNase H family. In terms of assembly, monomer. Mg(2+) is required as a cofactor.

The protein localises to the cytoplasm. It catalyses the reaction Endonucleolytic cleavage to 5'-phosphomonoester.. Its function is as follows. Endonuclease that specifically degrades the RNA of RNA-DNA hybrids. The protein is Ribonuclease HI of Vibrio vulnificus (strain CMCP6).